Here is a 404-residue protein sequence, read N- to C-terminus: Argininosuccinate synthase (404 aa).

7–15 (AYSGGLDTS) lines the ATP pocket. Tyr85 and Ser90 together coordinate L-citrulline. Gly115 is a binding site for ATP. L-aspartate-binding residues include Thr117, Asn121, and Asp122. Asn121 is a binding site for L-citrulline. The L-citrulline site is built by Arg125, Ser178, Ser187, Glu264, and Tyr276.

It belongs to the argininosuccinate synthase family. Type 1 subfamily. In terms of assembly, homotetramer.

The protein resides in the cytoplasm. It carries out the reaction L-citrulline + L-aspartate + ATP = 2-(N(omega)-L-arginino)succinate + AMP + diphosphate + H(+). It functions in the pathway amino-acid biosynthesis; L-arginine biosynthesis; L-arginine from L-ornithine and carbamoyl phosphate: step 2/3. This Rhodopirellula baltica (strain DSM 10527 / NCIMB 13988 / SH1) protein is Argininosuccinate synthase.